Consider the following 329-residue polypeptide: Anthranilate phosphoribosyltransferase (329 aa).

5-phospho-alpha-D-ribose 1-diphosphate-binding positions include Gly-78, 81–82 (GD), Thr-86, 88–91 (NLST), 106–114 (KHGNRSASG), and Ser-118. Gly-78 is a binding site for anthranilate. A Mg(2+)-binding site is contributed by Ser-90. Asn-109 contributes to the anthranilate binding site. Arg-164 serves as a coordination point for anthranilate. Mg(2+) contacts are provided by Asp-221 and Glu-222.

The protein belongs to the anthranilate phosphoribosyltransferase family. As to quaternary structure, homodimer. Requires Mg(2+) as cofactor.

It catalyses the reaction N-(5-phospho-beta-D-ribosyl)anthranilate + diphosphate = 5-phospho-alpha-D-ribose 1-diphosphate + anthranilate. It functions in the pathway amino-acid biosynthesis; L-tryptophan biosynthesis; L-tryptophan from chorismate: step 2/5. In terms of biological role, catalyzes the transfer of the phosphoribosyl group of 5-phosphorylribose-1-pyrophosphate (PRPP) to anthranilate to yield N-(5'-phosphoribosyl)-anthranilate (PRA). This is Anthranilate phosphoribosyltransferase from Pyrobaculum islandicum (strain DSM 4184 / JCM 9189 / GEO3).